Reading from the N-terminus, the 325-residue chain is RepFIB replication protein A (325 aa).

Residues 279–298 form a disordered region; that stretch reads APNDESKENPLPPSPAEKVS.

It belongs to the initiator RepB protein family.

Functionally, this protein is essential for plasmid replication; it is involved in copy control functions. In vitro, binds to the DNA repeat units, BCDD'D'', EFG and HIJ. The polypeptide is RepFIB replication protein A (repA) (Escherichia coli).